The following is a 380-amino-acid chain: Actinidain (380 aa).

The signal sequence occupies residues 1-24 (MGLPKSFVSMSLLFFSTLLILSLA). A propeptide spans 25-126 (FNAKNLTQRT…NRYEPRVGQV (102 aa)) (activation peptide). Residues Asn29, Asn81, and Asn111 are each glycosylated (N-linked (GlcNAc...) asparagine). Disulfide bonds link Cys148-Cys191, Cys182-Cys224, and Cys282-Cys332. The active site involves Cys151. Residues His288 and Asn308 contribute to the active site.

This sequence belongs to the peptidase C1 family. Fruit, present in small cells of the outer pericarp of mature fruit, but not large cells.

It carries out the reaction Specificity close to that of papain.. Functionally, cysteine protease responsible for the cleavage of kiwellin into kissper and KiTH. This chain is Actinidain, found in Actinidia deliciosa (Kiwi).